The primary structure comprises 872 residues: TATA box-binding protein-associated factor RNA polymerase I subunit B (872 aa).

The segment at 6–40 (ETMQLENMHCDVCEGTTFQEREGFYYCVECGTQKD) adopts an RRN7-type zinc-finger fold. Residues C15, C18, C32, and C35 each contribute to the Zn(2+) site. A B-reader region spans residues 41 to 72 (QIRAVDITAEDNFDDTAAGRYTARTIRQKKDT). The B-linker stretch occupies residues 73–84 (EKEDEDDITSWE). Residues 85–312 (FYNYVLRGFL…LPGNVAAKGK (228 aa)) form an N-terminal cyclin fold region. A disordered region spans residues 187–206 (DASGYRSHGGASESEGEQSL).

The protein belongs to the RRN7/TAF1B family.

It localises to the nucleus. Its subcellular location is the nucleolus. In terms of biological role, component of RNA polymerase I core factor complex that acts as a GTF2B/TFIIB-like factor and plays a key role in multiple steps during transcription initiation such as pre-initiation complex (PIC) assembly and postpolymerase recruitment events in polymerase I (Pol I) transcription. Binds rDNA promoters and plays a role in Pol I recruitment. This chain is TATA box-binding protein-associated factor RNA polymerase I subunit B, found in Drosophila melanogaster (Fruit fly).